A 115-amino-acid polypeptide reads, in one-letter code: Evasin P1183 (115 aa).

The N-terminal stretch at 1-25 (MTRNWSFRVIFVSAMWCALLKFATL) is a signal peptide. Disulfide bonds link C38–C58, C54–C94, C70–C99, and C89–C108. 3 N-linked (GlcNAc...) asparagine glycosylation sites follow: N45, N72, and N103.

The protein localises to the secreted. Salivary chemokine-binding protein which binds to host chemokine CCL2. This is Evasin P1183 from Amblyomma triste (Neotropical tick).